The chain runs to 1611 residues: Pentafunctional AROM polypeptide (1611 aa).

The 3-dehydroquinate synthase stretch occupies residues 1–391; the sequence is MSSSSADVLK…YEEKASVVAD (391 aa). NAD(+) is bound by residues 47 to 49, 84 to 87, 115 to 117, and Asp120; these read DTN, EGAK, and GGV. 7-phospho-2-dehydro-3-deoxy-D-arabino-heptonate is bound at residue Arg131. Position 140-141 (140-141) interacts with NAD(+); that stretch reads TT. Residues Asp147 and Lys153 each coordinate 7-phospho-2-dehydro-3-deoxy-D-arabino-heptonate. Lys162 contributes to the NAD(+) binding site. Position 163 (Asn163) interacts with 7-phospho-2-dehydro-3-deoxy-D-arabino-heptonate. NAD(+) contacts are provided by residues 180 to 183 and Asn191; that span reads FLTT. Glu195 is a Zn(2+) binding site. 7-phospho-2-dehydro-3-deoxy-D-arabino-heptonate is bound by residues 195-198 and Lys257; that span reads EVIK. Residue Glu267 is the Proton acceptor; for 3-dehydroquinate synthase activity of the active site. 7-phospho-2-dehydro-3-deoxy-D-arabino-heptonate-binding positions include 271-275 and His278; that span reads RNLVN. Residue His278 coordinates Zn(2+). The Proton acceptor; for 3-dehydroquinate synthase activity role is filled by His282. His294 and Lys363 together coordinate 7-phospho-2-dehydro-3-deoxy-D-arabino-heptonate. Zn(2+) is bound at residue His294. The segment at 404-863 is EPSP synthase; the sequence is VKAATPTKSP…WDDLQNKIGV (460 aa). Cys845 acts as the For EPSP synthase activity in catalysis. Residues 892–1093 are shikimate kinase; sequence DRPIFLIGMR…SVGNPTSFLS (202 aa). Residue 899 to 906 participates in ATP binding; that stretch reads GMRGAGKT. Residues 1094–1318 are 3-dehydroquinase; that stretch reads LTFPDVTPAL…AAPGQLTARE (225 aa). The active-site Proton acceptor; for 3-dehydroquinate dehydratase activity is the His1220. Catalysis depends on Lys1248, which acts as the Schiff-base intermediate with substrate; for 3-dehydroquinate dehydratase activity. Residues 1331 to 1611 are shikimate dehydrogenase; that stretch reads AKKFVLFGSP…RKAVLDKYFA (281 aa).

It in the N-terminal section; belongs to the sugar phosphate cyclases superfamily. Dehydroquinate synthase family. In the 2nd section; belongs to the EPSP synthase family. This sequence in the 3rd section; belongs to the shikimate kinase family. The protein in the 4th section; belongs to the type-I 3-dehydroquinase family. It in the C-terminal section; belongs to the shikimate dehydrogenase family. Homodimer. It depends on Zn(2+) as a cofactor.

The protein resides in the cytoplasm. It carries out the reaction 7-phospho-2-dehydro-3-deoxy-D-arabino-heptonate = 3-dehydroquinate + phosphate. The enzyme catalyses 3-dehydroquinate = 3-dehydroshikimate + H2O. It catalyses the reaction shikimate + NADP(+) = 3-dehydroshikimate + NADPH + H(+). The catalysed reaction is shikimate + ATP = 3-phosphoshikimate + ADP + H(+). It carries out the reaction 3-phosphoshikimate + phosphoenolpyruvate = 5-O-(1-carboxyvinyl)-3-phosphoshikimate + phosphate. It participates in metabolic intermediate biosynthesis; chorismate biosynthesis; chorismate from D-erythrose 4-phosphate and phosphoenolpyruvate: step 2/7. Its pathway is metabolic intermediate biosynthesis; chorismate biosynthesis; chorismate from D-erythrose 4-phosphate and phosphoenolpyruvate: step 3/7. It functions in the pathway metabolic intermediate biosynthesis; chorismate biosynthesis; chorismate from D-erythrose 4-phosphate and phosphoenolpyruvate: step 4/7. The protein operates within metabolic intermediate biosynthesis; chorismate biosynthesis; chorismate from D-erythrose 4-phosphate and phosphoenolpyruvate: step 5/7. It participates in metabolic intermediate biosynthesis; chorismate biosynthesis; chorismate from D-erythrose 4-phosphate and phosphoenolpyruvate: step 6/7. In terms of biological role, the AROM polypeptide catalyzes 5 consecutive enzymatic reactions in prechorismate polyaromatic amino acid biosynthesis. This chain is Pentafunctional AROM polypeptide, found in Cryptococcus neoformans var. neoformans serotype D (strain B-3501A) (Filobasidiella neoformans).